The chain runs to 765 residues: Probable dehydratase PflD (765 aa).

Residues 3-637 (NRISRLKTAL…VVGATPDGRF (635 aa)) form the PFL domain. A Glycine radical domain is found at 645-765 (GGLSPMLGQD…DIIRRTAHQL (121 aa)). The residue at position 741 (Gly741) is a Glycine radical.

The protein belongs to the glycyl radical enzyme (GRE) family.

Its function is as follows. Probably shows dehydratase activity. This is Probable dehydratase PflD (pflD) from Escherichia coli (strain K12).